Here is a 172-residue protein sequence, read N- to C-terminus: S-ribosylhomocysteine lyase (172 aa).

The Fe cation site is built by His54, His58, and Cys128.

This sequence belongs to the LuxS family. As to quaternary structure, homodimer. Requires Fe cation as cofactor.

It catalyses the reaction S-(5-deoxy-D-ribos-5-yl)-L-homocysteine = (S)-4,5-dihydroxypentane-2,3-dione + L-homocysteine. Its function is as follows. Involved in the synthesis of autoinducer 2 (AI-2) which is secreted by bacteria and is used to communicate both the cell density and the metabolic potential of the environment. The regulation of gene expression in response to changes in cell density is called quorum sensing. Catalyzes the transformation of S-ribosylhomocysteine (RHC) to homocysteine (HC) and 4,5-dihydroxy-2,3-pentadione (DPD). The protein is S-ribosylhomocysteine lyase of Vibrio cholerae serotype O1 (strain ATCC 39541 / Classical Ogawa 395 / O395).